A 482-amino-acid polypeptide reads, in one-letter code: MSFPEEKKMKKLPKYRQIVHFIKEKIGNGEWPIGSKIPSQRTLAKDFQVNRSTVITALEELMADGLIEGTMGKGTVVINNTWTLMAKNSAPDWDQYVTSGIQMPSRKIVQEINQSESNTDLIQLSKGELSAEIFPLAVMKEMMGKVSQHMEAFGYEEPKGYLPLREALSNYLKTIGINVSSSSILIVSGALQALQLISMGLLQRGSTVYLDQPSYLYSLHVFQSAGMKLTGLPMDNEGLLPENVHLTRGERGRAILYTNPCFHNPTGILMSKKRREEILAVSENTQLPIIEDDIYRELWIDEIPPYPIKTIDKNGHVLYIGSLSKTLSPGLRIGWIVGPEPVIERLSDIKMQTDYGSSSLSQRVAAEWFTSGHYQQHVEKVRQQLKVRRELALSALETHLKEVATWNIPKGGFFVWIKILPSISMKLLYTKALSKGILINLGSIYAQEKGNYIRLSYAYASLEDLQKGIYELGLMIKELASR.

In terms of domain architecture, HTH gntR-type spans leucine 12–asparagine 80. The H-T-H motif DNA-binding region spans glutamine 40–glutamate 59. Lysine 325 is modified (N6-(pyridoxal phosphate)lysine).

It in the C-terminal section; belongs to the class-I pyridoxal-phosphate-dependent aminotransferase family. Requires pyridoxal 5'-phosphate as cofactor.

This is an uncharacterized protein from Bacillus subtilis (strain 168).